The chain runs to 607 residues: Matrix metalloproteinase-16 (607 aa).

The signal sequence occupies residues Met1 to Cys31. Residues Ala32–Arg119 constitute a propeptide that is removed on maturation. N-linked (GlcNAc...) asparagine glycosylation is present at Asn83. The short motif at Pro99–Gln106 is the Cysteine switch element. Cys101 contributes to the Zn(2+) binding site. The Extracellular segment spans residues Tyr120–Ala564. Position 183 (Asp183) interacts with Ca(2+). Zn(2+)-binding residues include His193 and Asp195. The Ca(2+) site is built by Asp200, Gly201, Gly203, and Phe205. His208 is a binding site for Zn(2+). Positions 215, 217, and 219 each coordinate Ca(2+). His221 contributes to the Zn(2+) binding site. The Ca(2+) site is built by Asp223 and Glu226. His246 is a Zn(2+) binding site. Residue Glu247 is part of the active site. Residues His250 and His256 each coordinate Zn(2+). Residues Asp281–Pro340 are disordered. A compositionally biased stretch (pro residues) spans Asp294–Ala315. Hemopexin repeat units lie at residues Pro340–Leu388, Pro389–Ile434, Pro436–Pro484, and Glu485–Cys532. A disulfide bridge links Cys343 with Cys532. A helical membrane pass occupies residues Ile565–Phe585. The Cytoplasmic portion of the chain corresponds to Gln586–Val607.

It belongs to the peptidase M10A family. In terms of assembly, interacts with CSPG4 through CSPG4 chondroitin sulfate glycosaminoglycan. The cofactor is Zn(2+). Requires Ca(2+) as cofactor. In terms of processing, the precursor is cleaved by a furin endopeptidase. As to expression, strongly expressed in the lung, brain and smooth muscle cells. Weakly detectable in the spleen and liver and indetectable in the heart, skeletal muscle and kidney.

It is found in the cell membrane. Its subcellular location is the secreted. It localises to the extracellular space. The protein resides in the extracellular matrix. Endopeptidase that degrades various components of the extracellular matrix, such as collagen type III and fibronectin. Activates progelatinase A. Involved in the matrix remodeling of blood vessels. The short isoform efficiently converts progelatinase A to the intermediate form but not to the mature one. It has no effect on type I, II, IV and V collagen. However, upon interaction with CSPG4, it may be involved in degradation and invasion of type I collagen by melanoma cells. This is Matrix metalloproteinase-16 (Mmp16) from Rattus norvegicus (Rat).